We begin with the raw amino-acid sequence, 472 residues long: Cell division protein FtsP (472 aa).

Positions 1–27 (MSLSRRQFIQASGIALCAGAMPLTARA) form a signal peptide, tat-type signal.

This sequence belongs to the FtsP family. Post-translationally, predicted to be exported by the Tat system. The position of the signal peptide cleavage has not been experimentally proven.

The protein localises to the periplasm. In terms of biological role, cell division protein that is required for growth during stress conditions. May be involved in protecting or stabilizing the divisomal assembly under conditions of stress. The protein is Cell division protein FtsP of Dickeya dadantii (strain 3937) (Erwinia chrysanthemi (strain 3937)).